We begin with the raw amino-acid sequence, 129 residues long: Small ribosomal subunit protein uS11 (129 aa).

The protein belongs to the universal ribosomal protein uS11 family. As to quaternary structure, part of the 30S ribosomal subunit. Interacts with proteins S7 and S18. Binds to IF-3.

Its function is as follows. Located on the platform of the 30S subunit, it bridges several disparate RNA helices of the 16S rRNA. Forms part of the Shine-Dalgarno cleft in the 70S ribosome. This is Small ribosomal subunit protein uS11 from Lactobacillus gasseri (strain ATCC 33323 / DSM 20243 / BCRC 14619 / CIP 102991 / JCM 1131 / KCTC 3163 / NCIMB 11718 / NCTC 13722 / AM63).